Here is a 115-residue protein sequence, read N- to C-terminus: U3-lycotoxin-Ls1k (115 aa).

The first 20 residues, 1–20, serve as a signal peptide directing secretion; it reads MKFVLLFGVLVVTLFSYSSA. Residues 21–44 constitute a propeptide that is removed on maturation; it reads EMLDDFDQADEDELLSLIEKEEAR. Disulfide bonds link Cys48–Cys63, Cys55–Cys72, Cys62–Cys87, and Cys74–Cys85.

It belongs to the neurotoxin 19 (CSTX) family. 01 subfamily. In terms of tissue distribution, expressed by the venom gland.

It localises to the secreted. The polypeptide is U3-lycotoxin-Ls1k (Lycosa singoriensis (Wolf spider)).